Reading from the N-terminus, the 126-residue chain is NADP-reducing hydrogenase subunit HndB (126 aa).

In terms of assembly, heterotetramer composed of HndA, HndB, HndC and HndD subunits. HndA and HndB could form a heterodimeric intermediate in the electron transfer between the active site of hydrogenase subunit HndD and the NADP reduction site of the reducing subunit HndC.

It carries out the reaction H2 + NADP(+) = NADPH + H(+). Inhibited by oxygen. In terms of biological role, catalyzes the reduction of NADP in the presence of molecular H2 to yield NADPH. This Solidesulfovibrio fructosivorans (Desulfovibrio fructosivorans) protein is NADP-reducing hydrogenase subunit HndB (hndB).